We begin with the raw amino-acid sequence, 807 residues long: Sucrose synthase 1 (807 aa).

Positions 272–748 (MMFNVVILSP…GLKRIYEKYT (477 aa)) are GT-B glycosyltransferase.

The protein belongs to the glycosyltransferase 1 family. Plant sucrose synthase subfamily. Forms homotetramers. In endosperm it forms both homotetramers and heterotetramers with SS2, all three possible heterotetramers are formed. In terms of tissue distribution, highly expressed in developing endosperm and in roots and, at lower levels, in coleoptiles and aleurone. In 3 day old roots it is detected in cap cells and along the vascular strand, starting just after the meristemic region. In 9 day old leaves it is found in the phloem. In seeds it is distributed throughout the endosperm and also found in the assimilate-unloading tissues, the nucellar projection, the vascular area and at a high concentration in the chalazal region.

It catalyses the reaction an NDP-alpha-D-glucose + D-fructose = a ribonucleoside 5'-diphosphate + sucrose + H(+). In terms of biological role, sucrose-cleaving enzyme that provides UDP-glucose and fructose for various metabolic pathways. The polypeptide is Sucrose synthase 1 (SS1) (Hordeum vulgare (Barley)).